We begin with the raw amino-acid sequence, 736 residues long: Phosphoribosylformylglycinamidine synthase subunit PurL (736 aa).

Residue His49 is part of the active site. ATP is bound by residues Tyr52 and Lys91. Glu93 contributes to the Mg(2+) binding site. Residues 94-97 and Arg116 each bind substrate; that span reads SHNH. The active-site Proton acceptor is His95. Asp117 contributes to the Mg(2+) binding site. A substrate-binding site is contributed by Gln240. Asp268 provides a ligand contact to Mg(2+). 312 to 314 is a substrate binding site; it reads ESQ. Asp493 and Gly530 together coordinate ATP. A Mg(2+)-binding site is contributed by Asn531. Ser533 serves as a coordination point for substrate.

The protein belongs to the FGAMS family. As to quaternary structure, monomer. Part of the FGAM synthase complex composed of 1 PurL, 1 PurQ and 2 PurS subunits.

The protein localises to the cytoplasm. The enzyme catalyses N(2)-formyl-N(1)-(5-phospho-beta-D-ribosyl)glycinamide + L-glutamine + ATP + H2O = 2-formamido-N(1)-(5-O-phospho-beta-D-ribosyl)acetamidine + L-glutamate + ADP + phosphate + H(+). Its pathway is purine metabolism; IMP biosynthesis via de novo pathway; 5-amino-1-(5-phospho-D-ribosyl)imidazole from N(2)-formyl-N(1)-(5-phospho-D-ribosyl)glycinamide: step 1/2. Functionally, part of the phosphoribosylformylglycinamidine synthase complex involved in the purines biosynthetic pathway. Catalyzes the ATP-dependent conversion of formylglycinamide ribonucleotide (FGAR) and glutamine to yield formylglycinamidine ribonucleotide (FGAM) and glutamate. The FGAM synthase complex is composed of three subunits. PurQ produces an ammonia molecule by converting glutamine to glutamate. PurL transfers the ammonia molecule to FGAR to form FGAM in an ATP-dependent manner. PurS interacts with PurQ and PurL and is thought to assist in the transfer of the ammonia molecule from PurQ to PurL. The polypeptide is Phosphoribosylformylglycinamidine synthase subunit PurL (Rhodopseudomonas palustris (strain BisB5)).